A 1287-amino-acid chain; its full sequence is Cell adhesion molecule-related/down-regulated by oncogenes (1287 aa).

Positions 1–25 are cleaved as a signal peptide; the sequence is MHPDLGPLCTLLYVTLTILCSSVSS. The Extracellular segment spans residues 26–963; it reads DLAPYFTSEP…PATSPARSSD (938 aa). Ig-like C2-type domains follow at residues 29-114, 120-204, 225-303, 310-396, and 405-516; these read PYFT…ATVS, DFGS…LKVE, PTHS…KYVT, EHAS…GRLE, and PVII…ASLM. A disulfide bridge links cysteine 50 with cysteine 97. Residues asparagine 88, asparagine 100, asparagine 180, asparagine 287, asparagine 294, asparagine 342, and asparagine 427 are each glycosylated (N-linked (GlcNAc...) asparagine). Disulfide bonds link cysteine 141–cysteine 191 and cysteine 243–cysteine 290. 2 disulfide bridges follow: cysteine 333-cysteine 380 and cysteine 426-cysteine 500. Residues 531 to 553 are disordered; the sequence is LPDAAQNDDRSKRDGSETGLLSS. Positions 537–546 are enriched in basic and acidic residues; that stretch reads NDDRSKRDGS. N-linked (GlcNAc...) asparagine glycosylation is present at asparagine 570. 3 Fibronectin type-III domains span residues 579–677, 723–821, and 826–926; these read APII…SKEK, APDR…FPNR, and PITG…TKVK. A glycan (N-linked (GlcNAc...) asparagine) is linked at asparagine 873. Positions 933–955 are disordered; sequence EYPVKDLSTPPNSLGSGGNVGPA. The helical transmembrane segment at 964–984 threads the bilayer; the sequence is MLYLIVGCVLGVMVLILMVFI. At 985 to 1287 the chain is on the cytoplasmic side; that stretch reads AMCLWKNRQQ…TEVLQQPRET (303 aa). The interval 1268–1287 is disordered; that stretch reads SPPGIPLDSPTEVLQQPRET.

Part of a complex that contains BOC, CDON, NEO1, cadherins and CTNNB1. Interacts with NTN3. Interacts with PTCH1. Interacts with GAS1. Interacts with DHH, IHH and SHH. Post-translationally, N-glycosylated.

The protein resides in the cell membrane. Functionally, component of a cell-surface receptor complex that mediates cell-cell interactions between muscle precursor cells. Promotes differentiation of myogenic cells. This chain is Cell adhesion molecule-related/down-regulated by oncogenes (CDON), found in Homo sapiens (Human).